The primary structure comprises 619 residues: MMQVLLVTISLAVFPYQGSSIILESGNVNDYEVVYPQKVTALPKGAVQQPEQKYEDTMQYEFEVNGEPVVLHLEKNKILFSEDYSETHYYPDGREITTNPPVEDHCYYHGRIQNDAHSSASISACNGLKGHFKLRGEMYFIEPLKLSNSEAHAVYKYENIEKEDEIPKMCGVTQTNWESDKPIKKASQLVSTSAQFNKIFIELVIIVDHSMAKKCNSTATNTKIYEIVNSANEIFNPLNIHVTLIGVEFWCDRDLINVTSSADETLNSFGEWRASDLMTRKSHDNALLFTDMRFDLNTLGITFLAGMCQAYRSVEIVQEQGNRNFKTAVIMAHELSHNLGMYHDGKNCICNDSSCVMSPVLSDQPSKLFSNCSIHDYQRYLTRYKPKCIFNPPLRKDIVSPPVCGNEIWEEGEECDCGSPANCQNPCCDAATCKLKPGAECGNGLCCYQCKIKTAGTVCRRARDECDVPEHCTGQSAECPRDQLQQNGKPCQNNRGYCYNGDCPIMRNQCISLFGSRANVAKDSCFQENLKGSYYGYCRKENGRKIPCAPQDVKCGRLFCLNNSPRNKNPCNMHYSCMDQHKGMVDPGTKCEDGKVCNNKRQCVDVNTAYQSTTGFSQI.

The first 20 residues, 1–20 (MMQVLLVTISLAVFPYQGSS), serve as a signal peptide directing secretion. A propeptide spanning residues 21 to 188 (IILESGNVND…SDKPIKKASQ (168 aa)) is cleaved from the precursor. The Peptidase M12B domain occupies 199–393 (IFIELVIIVD…YKPKCIFNPP (195 aa)). Cysteine 215 and cysteine 251 are joined by a disulfide. 2 N-linked (GlcNAc...) (complex) asparagine glycosylation sites follow: asparagine 216 and asparagine 257. 3 disulfide bridges follow: cysteine 308–cysteine 388, cysteine 348–cysteine 372, and cysteine 350–cysteine 355. Histidine 333 is a binding site for Zn(2+). Glutamate 334 is an active-site residue. Residues histidine 337 and histidine 343 each contribute to the Zn(2+) site. Residues asparagine 351 and asparagine 371 are each glycosylated (N-linked (GlcNAc...) (complex) asparagine). The 87-residue stretch at 401–487 (PPVCGNEIWE…ECPRDQLQQN (87 aa)) folds into the Disintegrin domain. The Ca(2+) site is built by valine 403, asparagine 406, isoleucine 408, glutamate 410, glutamate 413, and aspartate 416. Cystine bridges form between cysteine 404–cysteine 433, cysteine 415–cysteine 428, cysteine 417–cysteine 423, cysteine 427–cysteine 450, cysteine 441–cysteine 447, cysteine 446–cysteine 472, cysteine 459–cysteine 479, cysteine 466–cysteine 498, cysteine 491–cysteine 503, cysteine 510–cysteine 560, cysteine 525–cysteine 571, cysteine 538–cysteine 548, cysteine 555–cysteine 597, and cysteine 591–cysteine 603. A D/ECD-tripeptide motif is present at residues 465–467 (ECD). Ca(2+) is bound by residues aspartate 467, valine 468, glutamate 470, aspartate 482, and glutamine 483.

This sequence belongs to the venom metalloproteinase (M12B) family. P-III subfamily. P-IIId sub-subfamily. As to quaternary structure, heterotrimer; disulfide-linked. The heterotrimer consists of 1 heavy chain and 2 light chains (lectins): LC1 and LC2. The cofactor is Zn(2+). Post-translationally, N-glycosylated; probably required for conformation. Removal of easily accessible sugars does not change its functional capacity, but removal of the core sugars with N-glycanase causes a virtually complete loss of enzyme activity, apparently as a result of major conformational changes in the molecule. Not O-glycosylated. As to expression, expressed by the venom gland.

The protein localises to the secreted. It catalyses the reaction Specifically activates several components of the blood clotting system, including coagulation factor X, coagulation factor IX and protein C by cleavage of Arg-|-Xaa bonds. Has no action on insulin B chain.. Functionally, catalytic subunit of blood coagulation factor X-activating enzyme. Activates coagulation factor X (F10) by cleaving the Arg-Ile bond and is also able to activate coagulation factor IX (F9) and protein S (PROS1) by specific cleavage of Arg-Ile and Arg-Val bonds. The sequence is that of Coagulation factor X-activating enzyme heavy chain from Daboia siamensis (Eastern Russel's viper).